We begin with the raw amino-acid sequence, 367 residues long: Alanine racemase (367 aa).

The active-site Proton acceptor; specific for D-alanine is K40. N6-(pyridoxal phosphate)lysine is present on K40. R136 contributes to the substrate binding site. The active-site Proton acceptor; specific for L-alanine is the Y263. A substrate-binding site is contributed by M310.

The protein belongs to the alanine racemase family. Pyridoxal 5'-phosphate is required as a cofactor.

The catalysed reaction is L-alanine = D-alanine. It participates in amino-acid biosynthesis; D-alanine biosynthesis; D-alanine from L-alanine: step 1/1. Its function is as follows. Catalyzes the interconversion of L-alanine and D-alanine. May also act on other amino acids. This Streptococcus thermophilus (strain CNRZ 1066) protein is Alanine racemase (alr).